The following is an 80-amino-acid chain: Large ribosomal subunit protein bL31B (80 aa).

The protein belongs to the bacterial ribosomal protein bL31 family. Type B subfamily. As to quaternary structure, part of the 50S ribosomal subunit.

This is Large ribosomal subunit protein bL31B from Methylobacillus flagellatus (strain ATCC 51484 / DSM 6875 / VKM B-1610 / KT).